Here is a 101-residue protein sequence, read N- to C-terminus: NADH-quinone oxidoreductase subunit K (101 aa).

Helical transmembrane passes span 5–25 (PNWY…GVLF), 30–50 (IVVL…LVTF), and 62–82 (LVFF…AIVI).

This sequence belongs to the complex I subunit 4L family. As to quaternary structure, NDH-1 is composed of 14 different subunits. Subunits NuoA, H, J, K, L, M, N constitute the membrane sector of the complex.

The protein resides in the cell inner membrane. It catalyses the reaction a quinone + NADH + 5 H(+)(in) = a quinol + NAD(+) + 4 H(+)(out). In terms of biological role, NDH-1 shuttles electrons from NADH, via FMN and iron-sulfur (Fe-S) centers, to quinones in the respiratory chain. The immediate electron acceptor for the enzyme in this species is believed to be a menaquinone. Couples the redox reaction to proton translocation (for every two electrons transferred, four hydrogen ions are translocated across the cytoplasmic membrane), and thus conserves the redox energy in a proton gradient. The protein is NADH-quinone oxidoreductase subunit K of Salinibacter ruber (strain DSM 13855 / M31).